Here is a 225-residue protein sequence, read N- to C-terminus: UPF0758 protein BcerKBAB4_4299 (225 aa).

Residues 103-225 (SIRSPEDCAS…FVSLKEKGHI (123 aa)) form the MPN domain. Zn(2+) contacts are provided by H174, H176, and D187. The JAMM motif signature appears at 174-187 (HNHPSGDPAPSRED).

It belongs to the UPF0758 family.

The polypeptide is UPF0758 protein BcerKBAB4_4299 (Bacillus mycoides (strain KBAB4) (Bacillus weihenstephanensis)).